A 504-amino-acid chain; its full sequence is Lysine--tRNA ligase (504 aa).

Residues 23–31 carry the 'HIGH' region motif; the sequence is PSGPIHIGN.

The protein belongs to the class-I aminoacyl-tRNA synthetase family.

It localises to the cytoplasm. The enzyme catalyses tRNA(Lys) + L-lysine + ATP = L-lysyl-tRNA(Lys) + AMP + diphosphate. This Picrophilus torridus (strain ATCC 700027 / DSM 9790 / JCM 10055 / NBRC 100828 / KAW 2/3) protein is Lysine--tRNA ligase.